A 613-amino-acid chain; its full sequence is Metacaspase-1 (613 aa).

Catalysis depends on residues His-404 and Cys-460.

It belongs to the peptidase C14B family. In terms of assembly, monomer.

Activated by Ca(2+). In terms of biological role, cysteine protease that cleaves specifically after arginine or lysine residues. May play a role in apoptosis. This chain is Metacaspase-1, found in Plasmodium falciparum (isolate 3D7).